We begin with the raw amino-acid sequence, 361 residues long: Phospho-N-acetylmuramoyl-pentapeptide-transferase (361 aa).

Helical transmembrane passes span 26–46 (AILG…VMIR), 73–93 (TMGG…WADL), 97–117 (YVWV…VDDY), 134–154 (YFWQ…TASM), 168–188 (VSLT…IVGS), 200–220 (GLAI…AYLS), 237–257 (TGEL…FLWF), 264–284 (VFMG…VAVI), 289–309 (IVLF…ILQV), and 340–360 (IVRF…SLKI).

It belongs to the glycosyltransferase 4 family. MraY subfamily. Mg(2+) is required as a cofactor.

It localises to the cell inner membrane. It carries out the reaction UDP-N-acetyl-alpha-D-muramoyl-L-alanyl-gamma-D-glutamyl-meso-2,6-diaminopimeloyl-D-alanyl-D-alanine + di-trans,octa-cis-undecaprenyl phosphate = di-trans,octa-cis-undecaprenyl diphospho-N-acetyl-alpha-D-muramoyl-L-alanyl-D-glutamyl-meso-2,6-diaminopimeloyl-D-alanyl-D-alanine + UMP. The protein operates within cell wall biogenesis; peptidoglycan biosynthesis. Catalyzes the initial step of the lipid cycle reactions in the biosynthesis of the cell wall peptidoglycan: transfers peptidoglycan precursor phospho-MurNAc-pentapeptide from UDP-MurNAc-pentapeptide onto the lipid carrier undecaprenyl phosphate, yielding undecaprenyl-pyrophosphoryl-MurNAc-pentapeptide, known as lipid I. This chain is Phospho-N-acetylmuramoyl-pentapeptide-transferase, found in Marinobacter nauticus (strain ATCC 700491 / DSM 11845 / VT8) (Marinobacter aquaeolei).